The following is a 551-amino-acid chain: HTH-type transcriptional regulator SgrR (551 aa).

The HTH marR-type domain maps to 1–116; sequence MPSARLQQQF…LVSHLGRSFR (116 aa). Positions 26–49 form a DNA-binding region, H-T-H motif; that stretch reads LNELAALLSCSRRHMRTLLNTMQD. Residues 163–492 are solute-binding; it reads ELEADIAHHW…IDWQADAARW (330 aa).

Functionally, activates the small RNA gene sgrS under glucose-phosphate stress conditions as well as yfdZ. Represses its own transcription under both stress and non-stress conditions. Might act as a sensor of the intracellular accumulation of phosphoglucose by binding these molecules in its C-terminal solute-binding domain. The protein is HTH-type transcriptional regulator SgrR of Escherichia coli O6:K15:H31 (strain 536 / UPEC).